A 470-amino-acid chain; its full sequence is Glutamate--tRNA ligase (470 aa).

Residues 9 to 19 (PSPTGFLHVGG) carry the 'HIGH' region motif. A 'KMSKS' region motif is present at residues 236–240 (KLSKR). K239 is an ATP binding site.

Belongs to the class-I aminoacyl-tRNA synthetase family. Glutamate--tRNA ligase type 1 subfamily. Monomer.

Its subcellular location is the cytoplasm. It catalyses the reaction tRNA(Glu) + L-glutamate + ATP = L-glutamyl-tRNA(Glu) + AMP + diphosphate. Catalyzes the attachment of glutamate to tRNA(Glu) in a two-step reaction: glutamate is first activated by ATP to form Glu-AMP and then transferred to the acceptor end of tRNA(Glu). The polypeptide is Glutamate--tRNA ligase (Psychromonas ingrahamii (strain DSM 17664 / CCUG 51855 / 37)).